Reading from the N-terminus, the 373-residue chain is Muconate cycloisomerase 1 (373 aa).

Residue lysine 169 is part of the active site. Lysine 169 (proton acceptor) is an active-site residue. Residues aspartate 198, glutamate 224, and aspartate 249 each contribute to the Mn(2+) site. Glutamate 327 (proton donor) is an active-site residue.

Belongs to the mandelate racemase/muconate lactonizing enzyme family. Mn(2+) serves as cofactor.

The enzyme catalyses (S)-muconolactone = cis,cis-muconate + H(+). This is Muconate cycloisomerase 1 (catB) from Rhodococcus opacus (Nocardia opaca).